The sequence spans 199 residues: Fe/S biogenesis protein NfuA (199 aa).

Residues Cys151 and Cys154 each contribute to the [4Fe-4S] cluster site.

Belongs to the NfuA family. In terms of assembly, homodimer. [4Fe-4S] cluster serves as cofactor.

Involved in iron-sulfur cluster biogenesis. Binds a 4Fe-4S cluster, can transfer this cluster to apoproteins, and thereby intervenes in the maturation of Fe/S proteins. Could also act as a scaffold/chaperone for damaged Fe/S proteins. The chain is Fe/S biogenesis protein NfuA from Xylella fastidiosa (strain M23).